A 798-amino-acid chain; its full sequence is Translation initiation factor IF-2 (798 aa).

The segment at 40–207 is disordered; that stretch reads SEQETKLRQA…QQESAKPAVP (168 aa). A compositionally biased stretch (low complexity) spans 57 to 186; the sequence is NTQSKATNNQ…RNNFNNQNRN (130 aa). The segment covering 187–196 has biased composition (basic residues); it reads RFNKKGKKGK. In terms of domain architecture, tr-type G spans 300 to 469; sequence TRPPVVTIMG…LLIAEVEDLK (170 aa). The tract at residues 309-316 is G1; that stretch reads GHVDHGKT. 309-316 serves as a coordination point for GTP; sequence GHVDHGKT. Residues 334–338 are G2; the sequence is GITQH. The segment at 355-358 is G3; it reads DTPG. GTP is bound by residues 355-359 and 409-412; these read DTPGH and NKID. The tract at residues 409 to 412 is G4; sequence NKID. A G5 region spans residues 445–447; the sequence is SAK.

It belongs to the TRAFAC class translation factor GTPase superfamily. Classic translation factor GTPase family. IF-2 subfamily.

The protein localises to the cytoplasm. Functionally, one of the essential components for the initiation of protein synthesis. Protects formylmethionyl-tRNA from spontaneous hydrolysis and promotes its binding to the 30S ribosomal subunits. Also involved in the hydrolysis of GTP during the formation of the 70S ribosomal complex. The chain is Translation initiation factor IF-2 from Enterococcus faecalis (strain ATCC 700802 / V583).